The primary structure comprises 273 residues: MLRIDKLTKRFGDNIAVNAATLDVDKPCMIGIIGRSGAGKSTLLRMINRLSDATDGRILFEDRDVTRLRGAEKRAWQAQCAMIFQQFNLVPRMDVVSNVLHGTLNRRSTLATMFNLYPTEDIHRAIDILDRLGIAAHAAKRAEALSGGQQQRVAIARALMQDPAIILADEPIASLDPMNAQVVMQALRRIHEEDGRTVIANLHTLDTARRYCDRVVGMRDGRIVFDGLPEQLTTGVAREIYGADASFSEAATSTEIDTLDAALPARQRAGATA.

The region spanning 2–245 (LRIDKLTKRF…VAREIYGADA (244 aa)) is the ABC transporter domain. 34–41 (GRSGAGKS) is an ATP binding site.

This sequence belongs to the ABC transporter superfamily. Phosphonates importer (TC 3.A.1.9.1) family. In terms of assembly, the complex is composed of two ATP-binding proteins (PhnC), two transmembrane proteins (PhnE) and a solute-binding protein (PhnD).

Its subcellular location is the cell inner membrane. The enzyme catalyses phosphonate(out) + ATP + H2O = phosphonate(in) + ADP + phosphate + H(+). Functionally, part of the ABC transporter complex PhnCDE involved in phosphonates import. Responsible for energy coupling to the transport system. In Ruegeria pomeroyi (strain ATCC 700808 / DSM 15171 / DSS-3) (Silicibacter pomeroyi), this protein is Phosphonates import ATP-binding protein PhnC.